Reading from the N-terminus, the 602-residue chain is Threonine--tRNA ligase (602 aa).

Positions 208 to 499 (DHRKLGTELK…LTEHCAGEFP (292 aa)) are catalytic. 3 residues coordinate Zn(2+): Cys300, His351, and His476.

This sequence belongs to the class-II aminoacyl-tRNA synthetase family. As to quaternary structure, homodimer. The cofactor is Zn(2+).

It localises to the cytoplasm. It carries out the reaction tRNA(Thr) + L-threonine + ATP = L-threonyl-tRNA(Thr) + AMP + diphosphate + H(+). Functionally, catalyzes the attachment of threonine to tRNA(Thr) in a two-step reaction: L-threonine is first activated by ATP to form Thr-AMP and then transferred to the acceptor end of tRNA(Thr). Also edits incorrectly charged L-seryl-tRNA(Thr). This Campylobacter jejuni subsp. jejuni serotype O:2 (strain ATCC 700819 / NCTC 11168) protein is Threonine--tRNA ligase.